The sequence spans 363 residues: S-methylmethionine--homocysteine S-methyltransferase BHMT2 (363 aa).

In terms of domain architecture, Hcy-binding spans 11-305; sequence RGILERLESG…YHIRAIAEEL (295 aa). C208, C290, and C291 together coordinate Zn(2+). At S321 the chain carries Phosphoserine.

In terms of assembly, homotetramer. Zn(2+) is required as a cofactor.

The enzyme catalyses S-methyl-L-methionine + L-homocysteine = 2 L-methionine + H(+). It participates in amino-acid biosynthesis; L-methionine biosynthesis via de novo pathway; L-methionine from L-homocysteine (BhmT route): step 1/1. Its function is as follows. Involved in the regulation of homocysteine metabolism. Converts betaine and homocysteine to dimethylglycine and methionine, respectively. This reaction is also required for the irreversible oxidation of choline. This Pongo abelii (Sumatran orangutan) protein is S-methylmethionine--homocysteine S-methyltransferase BHMT2 (BHMT2).